We begin with the raw amino-acid sequence, 383 residues long: MVIDPVTLSQELISFPSITPTDNGAISFLSDILSQYGFTCHILDFGDDTVTVRNLYAYRGTEEGPNLCFAGHTDVVKTGDLTKWKFDPFSGHIEDDILYGRGAVDMKSAICAFIAAVSRINFNEVPGSISFLISGDEEGDHFQYGTPSVLKWLNENNHKIDYCIIGEPTSKSFLGDTIKVGRRGSVHFKIICNGIQGHVAYPHFAENPIDNMVSILYKICNTTFDTGNEYFQPSNCEIVSVDTGNTSRNVIPDTIVAHINIRYNNIHTAESLFDIINNICAQVTPKYQLLHSVSGEPFFNQPNQYSDMLSSAIKKVTGQDAIASTSGGVSDSRFIKNVCPVIEFGLKNETAHKIDEHVPVKEIYQLADIYTEFIKQFFNLSTT.

H72 contributes to the Zn(2+) binding site. Residue D74 is part of the active site. D105 serves as a coordination point for Zn(2+). E137 acts as the Proton acceptor in catalysis. Residues E138, E167, and H352 each coordinate Zn(2+).

This sequence belongs to the peptidase M20A family. DapE subfamily. As to quaternary structure, homodimer. Zn(2+) is required as a cofactor. It depends on Co(2+) as a cofactor.

The enzyme catalyses N-succinyl-(2S,6S)-2,6-diaminopimelate + H2O = (2S,6S)-2,6-diaminopimelate + succinate. It functions in the pathway amino-acid biosynthesis; L-lysine biosynthesis via DAP pathway; LL-2,6-diaminopimelate from (S)-tetrahydrodipicolinate (succinylase route): step 3/3. Catalyzes the hydrolysis of N-succinyl-L,L-diaminopimelic acid (SDAP), forming succinate and LL-2,6-diaminopimelate (DAP), an intermediate involved in the bacterial biosynthesis of lysine and meso-diaminopimelic acid, an essential component of bacterial cell walls. In Ehrlichia ruminantium (strain Gardel), this protein is Succinyl-diaminopimelate desuccinylase.